The chain runs to 64 residues: Translation machinery-associated protein 7 homolog (64 aa).

Positions 1-64 (MSGREGGKKK…QGGIKKSGKK (64 aa)) are disordered. Basic and acidic residues predominate over residues 27–44 (VAFKQKQKEQQKALDAAK).

This sequence belongs to the TMA7 family.

The protein is Translation machinery-associated protein 7 homolog of Anopheles funestus (African malaria mosquito).